The sequence spans 486 residues: Ribulose bisphosphate carboxylase large chain (486 aa).

The substrate site is built by asparagine 125 and threonine 175. Lysine 177 (proton acceptor) is an active-site residue. A substrate-binding site is contributed by lysine 179. Mg(2+) is bound by residues lysine 203, aspartate 205, and glutamate 206. At lysine 203 the chain carries N6-carboxylysine. The active-site Proton acceptor is the histidine 295. Residues arginine 296, histidine 328, and serine 380 each contribute to the substrate site.

This sequence belongs to the RuBisCO large chain family. Type I subfamily. In terms of assembly, heterohexadecamer of 8 large chains and 8 small chains. Requires Mg(2+) as cofactor.

The catalysed reaction is 2 (2R)-3-phosphoglycerate + 2 H(+) = D-ribulose 1,5-bisphosphate + CO2 + H2O. It catalyses the reaction D-ribulose 1,5-bisphosphate + O2 = 2-phosphoglycolate + (2R)-3-phosphoglycerate + 2 H(+). Its function is as follows. RuBisCO catalyzes two reactions: the carboxylation of D-ribulose 1,5-bisphosphate, the primary event in carbon dioxide fixation, as well as the oxidative fragmentation of the pentose substrate. Both reactions occur simultaneously and in competition at the same active site. The polypeptide is Ribulose bisphosphate carboxylase large chain (Aurantimonas manganoxydans (strain ATCC BAA-1229 / DSM 21871 / SI85-9A1)).